Reading from the N-terminus, the 249-residue chain is 2,3-bisphosphoglycerate-dependent phosphoglycerate mutase (249 aa).

Substrate is bound by residues 8–15, 21–22, arginine 60, 87–90, lysine 98, 114–115, and 183–184; these read RHGESTWN, TG, ERHY, RR, and GN. The Tele-phosphohistidine intermediate role is filled by histidine 9. Glutamate 87 acts as the Proton donor/acceptor in catalysis.

This sequence belongs to the phosphoglycerate mutase family. BPG-dependent PGAM subfamily. In terms of assembly, homodimer.

It catalyses the reaction (2R)-2-phosphoglycerate = (2R)-3-phosphoglycerate. The protein operates within carbohydrate degradation; glycolysis; pyruvate from D-glyceraldehyde 3-phosphate: step 3/5. In terms of biological role, catalyzes the interconversion of 2-phosphoglycerate and 3-phosphoglycerate. This Aromatoleum aromaticum (strain DSM 19018 / LMG 30748 / EbN1) (Azoarcus sp. (strain EbN1)) protein is 2,3-bisphosphoglycerate-dependent phosphoglycerate mutase.